The primary structure comprises 132 residues: ATP synthase epsilon chain (132 aa).

It belongs to the ATPase epsilon chain family. In terms of assembly, F-type ATPases have 2 components, CF(1) - the catalytic core - and CF(0) - the membrane proton channel. CF(1) has five subunits: alpha(3), beta(3), gamma(1), delta(1), epsilon(1). CF(0) has three main subunits: a, b and c.

It localises to the cell membrane. Its function is as follows. Produces ATP from ADP in the presence of a proton gradient across the membrane. In Brevibacillus brevis (strain 47 / JCM 6285 / NBRC 100599), this protein is ATP synthase epsilon chain.